The chain runs to 256 residues: Nuclear shuttle protein (256 aa).

Residues 1–53 form a disordered region; it reads MYPSRNKRGSYFNQRRQYSRNHVWKRPTAAKRHDWKRRPSNTSKPNDEPKMSA. A compositionally biased stretch (basic residues) spans 17 to 39; it reads QYSRNHVWKRPTAAKRHDWKRRP. The Bipartite nuclear localization signal signature appears at 21-42; that stretch reads NHVWKRPTAAKRHDWKRRPSNT. The Nuclear localization signal signature appears at 81 to 96; it reads DLGRSEPNRSRSYIRL. Residues 150-187 are interaction with Arabidopsis thaliana NSI protein; the sequence is ELFGARIHSHGNLSVTPALKDRYYIRHVCKRVLSVEKD.

It belongs to the begomovirus nuclear shuttle protein family. In terms of assembly, binds to single-stranded and double-stranded viral DNA. Interacts with the host nuclear shuttle interacting (NSI) protein. This interaction may allow NSP to recruit NSI monomers to the viral genome and thus regulate nuclear export of viral genome by NSP.

Its subcellular location is the host nucleus. It localises to the host cytoplasm. It is found in the host cell membrane. Its function is as follows. Binds to the genomic viral ssDNA, shuttles it into and out of the cell nucleus. Begomoviruses use 2 proteins to transport their DNA from cell to cell. The nuclear shuttle protein (NSP) shuttles it between nucleus and cytoplasm and the movement protein (MP) probably transports the DNA-NSP complex to the cell periphery and facilitates movement across the cell wall. This is Nuclear shuttle protein from Abutilon mosaic virus (isolate West India) (AbMV).